We begin with the raw amino-acid sequence, 855 residues long: DNA mismatch repair protein MutS (855 aa).

Residue 613-620 (GPNMGGKS) coordinates ATP. The interval 796 to 816 (TTSLPHEMPSQQSGKPASPMQ) is disordered.

This sequence belongs to the DNA mismatch repair MutS family.

Its function is as follows. This protein is involved in the repair of mismatches in DNA. It is possible that it carries out the mismatch recognition step. This protein has a weak ATPase activity. The chain is DNA mismatch repair protein MutS from Pseudomonas aeruginosa (strain ATCC 15692 / DSM 22644 / CIP 104116 / JCM 14847 / LMG 12228 / 1C / PRS 101 / PAO1).